A 740-amino-acid chain; its full sequence is Ion-translocating oxidoreductase complex subunit C (740 aa).

4Fe-4S ferredoxin-type domains follow at residues 369–397 (GEPQ…QQLY) and 407–436 (KATT…VQYF). [4Fe-4S] cluster-binding residues include Cys377, Cys380, Cys383, Cys387, Cys416, Cys419, Cys422, and Cys426. The interval 602-684 (KLEQQQANAE…EPEEQVDPRK (83 aa)) is disordered. Composition is skewed to low complexity over residues 605–615 (QQQANAEPEQQ) and 637–647 (QQQANAEPEQQ).

This sequence belongs to the 4Fe4S bacterial-type ferredoxin family. RnfC subfamily. The complex is composed of six subunits: RsxA, RsxB, RsxC, RsxD, RsxE and RsxG. Requires [4Fe-4S] cluster as cofactor.

The protein localises to the cell inner membrane. Functionally, part of a membrane-bound complex that couples electron transfer with translocation of ions across the membrane. Required to maintain the reduced state of SoxR. This is Ion-translocating oxidoreductase complex subunit C from Escherichia coli O7:K1 (strain IAI39 / ExPEC).